A 172-amino-acid polypeptide reads, in one-letter code: Adrenodoxin-like protein 1, mitochondrial (172 aa).

The 2Fe-2S ferredoxin-type domain maps to 57 to 159 (VNITYVDKDG…GMELELPKAT (103 aa)). The [2Fe-2S] cluster site is built by Cys-94, Cys-100, Cys-103, and Cys-140.

Belongs to the adrenodoxin/putidaredoxin family. [2Fe-2S] cluster serves as cofactor.

Its subcellular location is the mitochondrion matrix. Functionally, required for ecdysteroidogenesis in the prothoracic gland which is necessary for larval to pupal transition. The sequence is that of Adrenodoxin-like protein 1, mitochondrial from Drosophila melanogaster (Fruit fly).